Here is a 233-residue protein sequence, read N- to C-terminus: Small ribosomal subunit protein uS2 (233 aa).

It belongs to the universal ribosomal protein uS2 family.

The protein is Small ribosomal subunit protein uS2 of Clostridium botulinum (strain Eklund 17B / Type B).